The following is a 95-amino-acid chain: Protein TusB (95 aa).

The protein belongs to the DsrH/TusB family. Heterohexamer, formed by a dimer of trimers. The hexameric TusBCD complex contains 2 copies each of TusB, TusC and TusD. The TusBCD complex interacts with TusE.

It is found in the cytoplasm. Functionally, part of a sulfur-relay system required for 2-thiolation of 5-methylaminomethyl-2-thiouridine (mnm(5)s(2)U) at tRNA wobble positions. In Cronobacter sakazakii (strain ATCC BAA-894) (Enterobacter sakazakii), this protein is Protein TusB.